Here is a 435-residue protein sequence, read N- to C-terminus: UPF0053 protein Rv2366c (435 aa).

A CNNM transmembrane domain is found at 1-185 (MTGYYQLLGS…QQRGVVAADE (185 aa)). 2 helical membrane-spanning segments follow: residues 7–27 (LLGS…DAAI) and 89–109 (VWGL…VVGV). CBS domains follow at residues 204-267 (MVPR…GRET) and 272-329 (VMRP…IADE).

The protein belongs to the UPF0053 family.

Its subcellular location is the cell membrane. This is UPF0053 protein Rv2366c from Mycobacterium tuberculosis (strain ATCC 25618 / H37Rv).